The sequence spans 237 residues: Pyridoxine 5'-phosphate synthase (237 aa).

Residues Asn7 and Arg18 each contribute to the 3-amino-2-oxopropyl phosphate site. Residue His43 is the Proton acceptor of the active site. Positions 45 and 50 each coordinate 1-deoxy-D-xylulose 5-phosphate. Glu70 acts as the Proton acceptor in catalysis. Thr100 is a 1-deoxy-D-xylulose 5-phosphate binding site. His190 serves as the catalytic Proton donor. 3-amino-2-oxopropyl phosphate contacts are provided by residues Asp191 and 213 to 214 (GH).

Belongs to the PNP synthase family. As to quaternary structure, homooctamer; tetramer of dimers.

It localises to the cytoplasm. The enzyme catalyses 3-amino-2-oxopropyl phosphate + 1-deoxy-D-xylulose 5-phosphate = pyridoxine 5'-phosphate + phosphate + 2 H2O + H(+). Its pathway is cofactor biosynthesis; pyridoxine 5'-phosphate biosynthesis; pyridoxine 5'-phosphate from D-erythrose 4-phosphate: step 5/5. In terms of biological role, catalyzes the complicated ring closure reaction between the two acyclic compounds 1-deoxy-D-xylulose-5-phosphate (DXP) and 3-amino-2-oxopropyl phosphate (1-amino-acetone-3-phosphate or AAP) to form pyridoxine 5'-phosphate (PNP) and inorganic phosphate. The sequence is that of Pyridoxine 5'-phosphate synthase from Bacteroides thetaiotaomicron (strain ATCC 29148 / DSM 2079 / JCM 5827 / CCUG 10774 / NCTC 10582 / VPI-5482 / E50).